A 222-amino-acid polypeptide reads, in one-letter code: GMP/IMP nucleotidase YrfG (222 aa).

Asp-9 (nucleophile) is an active-site residue. Residues Asp-9 and Asp-11 each contribute to the Mg(2+) site. Residues 9 to 11 (DVD) and Lys-149 contribute to the substrate site. Asp-174 serves as a coordination point for Mg(2+).

The protein belongs to the HAD-like hydrolase superfamily. Mg(2+) serves as cofactor. The cofactor is Mn(2+). Requires Co(2+) as cofactor. It depends on Zn(2+) as a cofactor.

The enzyme catalyses a ribonucleoside 5'-phosphate + H2O = a ribonucleoside + phosphate. Catalyzes the dephosphorylation of different purine nucleotides (GMP and IMP). Also hydrolyzes flavin mononucleotide (FMN). This chain is GMP/IMP nucleotidase YrfG (yrfG), found in Escherichia coli (strain K12).